The chain runs to 259 residues: UPF0246 protein PLES_14941 (259 aa).

It belongs to the UPF0246 family.

This chain is UPF0246 protein PLES_14941, found in Pseudomonas aeruginosa (strain LESB58).